A 1254-amino-acid polypeptide reads, in one-letter code: Protein transport protein Sec31A (1254 aa).

WD repeat units lie at residues 4-47 (KEIN…EIFE), 64-111 (SSPH…AGDS), 120-160 (KHTG…SPMT), 166-206 (QPQE…LIIK), 209-254 (DHSN…SPLK), 258-298 (NHTR…VLYE), and 301-341 (TSTQ…NDNA). Positions 364–383 (TLPPLQLPQQTSPQSTITPL) are enriched in low complexity. The interval 364-386 (TLPPLQLPQQTSPQSTITPLKKP) is disordered. The WD 8; interaction with SEC13 repeat unit spans residues 397–428 (SFAFGGKLVTLDNIKPTAQQPQQTAAHVVHIS). Disordered stretches follow at residues 818–892 (PMQT…QSPA), 983–1008 (CFQHGGPGSPTSYLPPPGARAPGTQH), and 1058–1125 (PPAP…PGAP). Over residues 832-846 (AQPAAPAVPPQYYQQ) the composition is skewed to low complexity. Composition is skewed to polar residues over residues 847–863 (GRSATTVTSWSNQTPTA) and 872–881 (VPSSDPQGDS). The segment covering 1080–1091 (QTLQPQQQVPDQ) has biased composition (low complexity).

It belongs to the WD repeat SEC31 family. In terms of assembly, COPII is composed of at least 5 proteins: the SEC23/24 complex, the SEC13/31 complex and SAR1. SEC13 and SEC31 make a 2:2 tetramer that forms the edge element of the COPII outer coat. The tetramer self-assembles in multiple copies to form the complete polyhedral cage. Interacts (via WD 8) with SEC13.

It localises to the cytoplasm. Its subcellular location is the cytoplasmic vesicle. The protein resides in the COPII-coated vesicle membrane. It is found in the endoplasmic reticulum membrane. Functionally, component of the coat protein complex II (COPII) which promotes the formation of transport vesicles from the endoplasmic reticulum (ER). The coat has two main functions, the physical deformation of the endoplasmic reticulum membrane into vesicles and the selection of cargo molecules. The sequence is that of Protein transport protein Sec31A (sec31a) from Danio rerio (Zebrafish).